The chain runs to 398 residues: Enoate reductase 1 (398 aa).

FMN is bound by residues threonine 37 and histidine 191. Histidine 191 and asparagine 194 together coordinate substrate. The active-site Proton donor is tyrosine 196. Residues arginine 243 and arginine 348 each contribute to the FMN site. Tyrosine 375 contributes to the substrate binding site.

It belongs to the NADH:flavin oxidoreductase/NADH oxidase family. Homodimer or heterodimer. FMN is required as a cofactor.

The catalysed reaction is butanoate + NAD(+) = (2E)-2-butenoate + NADH + H(+). Enoate reductase with broad substrate specificity for different alpha,beta-unsaturated carbonyl compounds. Prefers NADPH over NADH as cofactor. This is Enoate reductase 1 (KYE1) from Kluyveromyces lactis (strain ATCC 8585 / CBS 2359 / DSM 70799 / NBRC 1267 / NRRL Y-1140 / WM37) (Yeast).